The following is a 1405-amino-acid chain: DNA-directed RNA polymerase subunit beta' (1405 aa).

Residues Cys70, Cys72, Cys85, and Cys88 each contribute to the Zn(2+) site. Residues Asp460, Asp462, and Asp464 each coordinate Mg(2+). The Zn(2+) site is built by Cys814, Cys888, Cys895, and Cys898.

Belongs to the RNA polymerase beta' chain family. In terms of assembly, the RNAP catalytic core consists of 2 alpha, 1 beta, 1 beta' and 1 omega subunit. When a sigma factor is associated with the core the holoenzyme is formed, which can initiate transcription. Mg(2+) serves as cofactor. Requires Zn(2+) as cofactor.

The enzyme catalyses RNA(n) + a ribonucleoside 5'-triphosphate = RNA(n+1) + diphosphate. In terms of biological role, DNA-dependent RNA polymerase catalyzes the transcription of DNA into RNA using the four ribonucleoside triphosphates as substrates. This Shewanella sp. (strain MR-7) protein is DNA-directed RNA polymerase subunit beta'.